Here is a 298-residue protein sequence, read N- to C-terminus: Methylsterol monooxygenase 1-1 (298 aa).

The next 3 membrane-spanning stretches (helical) occupy residues 42–62, 96–116, and 118–138; these read ILFLFLVFSLVPLPLVFVELA, FILVVGPLQLVSYPSIQMIEI, and SGLPLPTITEMLSQLVVYFLI. The Fatty acid hydroxylase domain maps to 132 to 267; the sequence is LVVYFLIEDY…FTYCDYIYGT (136 aa). Positions 147 to 151 match the Histidine box-1 motif; that stretch reads HRFFH. The Histidine box-2 motif lies at 160 to 164; sequence HRVHH. The helical transmembrane segment at 189–209 threads the bilayer; that stretch reads TFMGPAIAPGHMITFWLWIAL. The short motif at 239-245 is the Histidine box-3 element; it reads YHDYHHY.

The protein belongs to the sterol desaturase family. In terms of assembly, interacts with ACBP1. Fe cation is required as a cofactor. As to expression, expressed in rosettes, stems, roots, floral buds, flowers and siliques.

It localises to the endoplasmic reticulum membrane. It carries out the reaction 4,4-dimethyl-5alpha-cholest-7-en-3beta-ol + 6 Fe(II)-[cytochrome b5] + 3 O2 + 5 H(+) = 4alpha-carboxy-4beta-methyl-5alpha-cholest-7-ene-3beta-ol + 6 Fe(III)-[cytochrome b5] + 4 H2O. It catalyses the reaction 24-methylenecycloartanol + 6 Fe(II)-[cytochrome b5] + 3 O2 + 5 H(+) = 4alpha-carboxy-4beta,14alpha-dimethyl-9beta,19-cyclo-5alpha-ergost-24(24(1))-en-3beta-ol + 6 Fe(III)-[cytochrome b5] + 4 H2O. Its function is as follows. Non-heme iron oxygenase involved in sterols biosynthesis by catalyzing the removal of the first methyl group at the C-4 position. 4,4-dimethyl-9-beta,19-cyclopropylsterols such as 24-methylenecycloartanol are the preferred substrates. Acts as a rate-limiting enzyme in the sterol pathway via interaction with ACBP1; sterols serve as lipid modulators for gene expression of homeodomain-leucine zipper IV transcription factors. Together with SMO1-2, involved in the maintenance of sterol composition to balance auxin and cytokinin activities during embryogenesis. The chain is Methylsterol monooxygenase 1-1 from Arabidopsis thaliana (Mouse-ear cress).